Here is a 545-residue protein sequence, read N- to C-terminus: Chaperonin GroEL 2 (545 aa).

ATP contacts are provided by residues 29–32 (TLGP), 86–90 (DGTTT), glycine 413, 479–481 (NAA), and aspartate 495.

This sequence belongs to the chaperonin (HSP60) family. In terms of assembly, forms a cylinder of 14 subunits composed of two heptameric rings stacked back-to-back. Interacts with the co-chaperonin GroES.

The protein resides in the cytoplasm. The catalysed reaction is ATP + H2O + a folded polypeptide = ADP + phosphate + an unfolded polypeptide.. In terms of biological role, together with its co-chaperonin GroES, plays an essential role in assisting protein folding. The GroEL-GroES system forms a nano-cage that allows encapsulation of the non-native substrate proteins and provides a physical environment optimized to promote and accelerate protein folding. This chain is Chaperonin GroEL 2, found in Prochlorococcus marinus (strain SARG / CCMP1375 / SS120).